We begin with the raw amino-acid sequence, 245 residues long: NAD-dependent protein deacylase (245 aa).

Positions Met1–His237 constitute a Deacetylase sirtuin-type domain. Gly13–Trp32 contacts NAD(+). Positions 57 and 60 each coordinate substrate. Position 94–97 (Gln94–Asp97) interacts with NAD(+). Residue His112 is the Proton acceptor of the active site. Zn(2+)-binding residues include Cys120 and Cys139. Residues Gly179–Ser181, Asn205–Glu207, and Ala223 each bind NAD(+).

Belongs to the sirtuin family. Class III subfamily. Zn(2+) is required as a cofactor.

It is found in the cytoplasm. It carries out the reaction N(6)-acetyl-L-lysyl-[protein] + NAD(+) + H2O = 2''-O-acetyl-ADP-D-ribose + nicotinamide + L-lysyl-[protein]. It catalyses the reaction N(6)-succinyl-L-lysyl-[protein] + NAD(+) + H2O = 2''-O-succinyl-ADP-D-ribose + nicotinamide + L-lysyl-[protein]. Its function is as follows. NAD-dependent lysine deacetylase and desuccinylase that specifically removes acetyl and succinyl groups on target proteins. Modulates the activities of several proteins which are inactive in their acylated form. The polypeptide is NAD-dependent protein deacylase (Vibrio vulnificus (strain CMCP6)).